The chain runs to 275 residues: Mitochondrial prohibitin complex protein 1 (275 aa).

Residues 180 to 213 are a coiled coil; that stretch reads REFTEAVEMKQVAQQEAEKARYLVEKAEQMKIAA.

This sequence belongs to the prohibitin family. High molecular weight complex that consist of phb-1 and phb-2.

It is found in the mitochondrion inner membrane. PHB proteins are essential during embryonic development and are required for somatic and germline differentiation in the larval gonad. A deficiency in PHB proteins results in altered mitochondrial biogenesis in body wall muscle cells. The polypeptide is Mitochondrial prohibitin complex protein 1 (phb-1) (Caenorhabditis elegans).